A 129-amino-acid chain; its full sequence is UPF0325 protein YPTS_3127 (129 aa).

Belongs to the UPF0325 family.

This Yersinia pseudotuberculosis serotype IB (strain PB1/+) protein is UPF0325 protein YPTS_3127.